Reading from the N-terminus, the 623-residue chain is Serine/threonine-protein kinase MAK (623 aa).

The Protein kinase domain maps to 4 to 284; it reads YTTMRQLGDG…ASQALKHPYF (281 aa). ATP is bound by residues 10–18 and K33; that span reads LGDGTYGSV. D125 serves as the catalytic Proton acceptor. The residue at position 157 (T157) is a Phosphothreonine; by autocatalysis. Y159 is subject to Phosphotyrosine; by autocatalysis. Disordered stretches follow at residues 328 to 396 and 416 to 469; these read IDQV…RRRW and GASH…SDSE. Positions 356-369 are enriched in low complexity; sequence QQPPKQQSQEKPPQ. Residues 446 to 455 show a composition bias toward polar residues; it reads SGSNHSTGEN.

The protein belongs to the protein kinase superfamily. CMGC Ser/Thr protein kinase family. CDC2/CDKX subfamily. Interacts with RP1. Interacts with AR and CDK20. Found in a complex containing MAK, AR and NCOA3. Interacts with FZR1 (via WD repeats). It depends on Mg(2+) as a cofactor. Autophosphorylated. Phosphorylated on serine and threonine residues. In terms of tissue distribution, expressed in prostate cancer cell lines at generally higher levels than in normal prostate epithelial cell lines. Isoform 1 is expressed in kidney, testis, lung, trachea, and retina. Isoform 2 is retina-specific where it is expressed in rod and cone photoreceptors.

It is found in the nucleus. The protein localises to the cytoplasm. It localises to the cytoskeleton. Its subcellular location is the microtubule organizing center. The protein resides in the centrosome. It is found in the spindle. The protein localises to the midbody. It localises to the cell projection. Its subcellular location is the cilium. The protein resides in the photoreceptor outer segment. It is found in the photoreceptor inner segment. It carries out the reaction L-seryl-[protein] + ATP = O-phospho-L-seryl-[protein] + ADP + H(+). It catalyses the reaction L-threonyl-[protein] + ATP = O-phospho-L-threonyl-[protein] + ADP + H(+). In terms of biological role, essential for the regulation of ciliary length and required for the long-term survival of photoreceptors. Phosphorylates FZR1 in a cell cycle-dependent manner. Plays a role in the transcriptional coactivation of AR. Could play an important function in spermatogenesis. May play a role in chromosomal stability in prostate cancer cells. This chain is Serine/threonine-protein kinase MAK (MAK), found in Homo sapiens (Human).